We begin with the raw amino-acid sequence, 225 residues long: 3-dehydroquinate dehydratase (225 aa).

3-dehydroquinate-binding positions include Ser-6, 30–32 (EWR), and Arg-62. Residue His-118 is the Proton donor/acceptor of the active site. Lys-143 acts as the Schiff-base intermediate with substrate in catalysis. Residues Arg-186, Ser-205, and Gln-209 each coordinate 3-dehydroquinate.

Belongs to the type-I 3-dehydroquinase family. In terms of assembly, homodimer.

It catalyses the reaction 3-dehydroquinate = 3-dehydroshikimate + H2O. It participates in metabolic intermediate biosynthesis; chorismate biosynthesis; chorismate from D-erythrose 4-phosphate and phosphoenolpyruvate: step 3/7. In terms of biological role, involved in the third step of the chorismate pathway, which leads to the biosynthesis of aromatic amino acids. Catalyzes the cis-dehydration of 3-dehydroquinate (DHQ) and introduces the first double bond of the aromatic ring to yield 3-dehydroshikimate. In Streptococcus pneumoniae (strain Taiwan19F-14), this protein is 3-dehydroquinate dehydratase.